Consider the following 579-residue polypeptide: Zinc finger protein 384 (579 aa).

Positions 171-198 (TLTEEGGGGGGGGGTVAPPKPPRGRKKK) are disordered. The span at 175 to 185 (EGGGGGGGGGT) shows a compositional bias: gly residues. 8 C2H2-type zinc fingers span residues 229-251 (YRCR…SKSH), 257-279 (HKCP…IRIH), 285-307 (YSCN…TRIH), 318-340 (HKCP…LRIH), 346-368 (YNCS…TRIH), 374-398 (YKCA…RRQH), 404-426 (FKCH…LSTH), and 434-456 (YTCT…MRKH). Residues 500-513 (QAQASQASQQQQQQ) are compositionally biased toward low complexity. The interval 500 to 553 (QAQASQASQQQQQQQPPPPQPPHFQSPGAAPQGGGGGDSNQNPPPQCSFDLTPY) is disordered. The span at 514-523 (QPPPPQPPHF) shows a compositional bias: pro residues.

This sequence belongs to the krueppel C2H2-type zinc-finger protein family. As to quaternary structure, interacts with BCAR1. In terms of tissue distribution, expressed in osteocytes, osteoblasts, and chondrocytes in bone.

It localises to the nucleus. In terms of biological role, transcription factor that binds the consensus DNA sequence [GC]AAAAA. Seems to bind and regulate the promoters of MMP1, MMP3, MMP7 and COL1A1. The polypeptide is Zinc finger protein 384 (Znf384) (Rattus norvegicus (Rat)).